A 149-amino-acid chain; its full sequence is D-aminoacyl-tRNA deacylase (149 aa).

The short motif at 137 to 138 is the Gly-cisPro motif, important for rejection of L-amino acids element; it reads GP.

The protein belongs to the DTD family. Homodimer.

The protein localises to the cytoplasm. The enzyme catalyses glycyl-tRNA(Ala) + H2O = tRNA(Ala) + glycine + H(+). The catalysed reaction is a D-aminoacyl-tRNA + H2O = a tRNA + a D-alpha-amino acid + H(+). In terms of biological role, an aminoacyl-tRNA editing enzyme that deacylates mischarged D-aminoacyl-tRNAs. Also deacylates mischarged glycyl-tRNA(Ala), protecting cells against glycine mischarging by AlaRS. Acts via tRNA-based rather than protein-based catalysis; rejects L-amino acids rather than detecting D-amino acids in the active site. By recycling D-aminoacyl-tRNA to D-amino acids and free tRNA molecules, this enzyme counteracts the toxicity associated with the formation of D-aminoacyl-tRNA entities in vivo and helps enforce protein L-homochirality. This is D-aminoacyl-tRNA deacylase from Syntrophomonas wolfei subsp. wolfei (strain DSM 2245B / Goettingen).